An 809-amino-acid chain; its full sequence is Sucrose synthase 2 (809 aa).

Residues 278–756 (MVFNVVILSP…GLQRIYERYT (479 aa)) are GT-B glycosyltransferase.

Belongs to the glycosyltransferase 1 family. Plant sucrose synthase subfamily.

The enzyme catalyses an NDP-alpha-D-glucose + D-fructose = a ribonucleoside 5'-diphosphate + sucrose + H(+). Its function is as follows. Sucrose-cleaving enzyme that provides UDP-glucose and fructose for various metabolic pathways. This chain is Sucrose synthase 2 (SUS2), found in Pisum sativum (Garden pea).